Here is a 120-residue protein sequence, read N- to C-terminus: Large ribosomal subunit protein uL18 (120 aa).

Belongs to the universal ribosomal protein uL18 family. In terms of assembly, part of the 50S ribosomal subunit; part of the 5S rRNA/L5/L18/L25 subcomplex. Contacts the 5S and 23S rRNAs.

Its function is as follows. This is one of the proteins that bind and probably mediate the attachment of the 5S RNA into the large ribosomal subunit, where it forms part of the central protuberance. In Maricaulis maris (strain MCS10) (Caulobacter maris), this protein is Large ribosomal subunit protein uL18.